We begin with the raw amino-acid sequence, 352 residues long: Beta-1,4-xylanase (352 aa).

Residues 1 to 23 (MINQRFSILVLLLILLTFSLGFL) form the signal peptide. The region spanning 29 to 352 (GMEIPSLKEV…KKAFWEIVKF (324 aa)) is the GH10 domain. Glutamate 155 acts as the Proton donor in catalysis. The active-site Nucleophile is glutamate 262.

The protein belongs to the glycosyl hydrolase 10 (cellulase F) family.

It is found in the secreted. It carries out the reaction Endohydrolysis of (1-&gt;4)-beta-D-xylosidic linkages in xylans.. It functions in the pathway glycan degradation; xylan degradation. The chain is Beta-1,4-xylanase (xynA) from Dictyoglomus thermophilum.